Reading from the N-terminus, the 230-residue chain is RING finger protein 141 (230 aa).

The RING-type zinc-finger motif lies at 154–191 (ECCICMDGRVDLILPCAHSFCQKCIDKWSDRHRSCPVC).

The protein is RING finger protein 141 (RNF141) of Gallus gallus (Chicken).